We begin with the raw amino-acid sequence, 339 residues long: Ketol-acid reductoisomerase (NADP(+)) (339 aa).

Residues 1–182 form the KARI N-terminal Rossmann domain; sequence MRVYYDRDAD…GGGRAGIIET (182 aa). NADP(+) is bound by residues 24-27, arginine 48, serine 51, threonine 53, and 83-86; these read YGSQ and DELQ. Histidine 108 is a catalytic residue. Glycine 134 serves as a coordination point for NADP(+). In terms of domain architecture, KARI C-terminal knotted spans 183 to 328; the sequence is TFKEECETDL…AKLRGMMPWI (146 aa). The Mg(2+) site is built by aspartate 191, glutamate 195, glutamate 227, and glutamate 231. Residue serine 252 participates in substrate binding.

Belongs to the ketol-acid reductoisomerase family. Mg(2+) is required as a cofactor.

The enzyme catalyses (2R)-2,3-dihydroxy-3-methylbutanoate + NADP(+) = (2S)-2-acetolactate + NADPH + H(+). It carries out the reaction (2R,3R)-2,3-dihydroxy-3-methylpentanoate + NADP(+) = (S)-2-ethyl-2-hydroxy-3-oxobutanoate + NADPH + H(+). The protein operates within amino-acid biosynthesis; L-isoleucine biosynthesis; L-isoleucine from 2-oxobutanoate: step 2/4. It participates in amino-acid biosynthesis; L-valine biosynthesis; L-valine from pyruvate: step 2/4. Functionally, involved in the biosynthesis of branched-chain amino acids (BCAA). Catalyzes an alkyl-migration followed by a ketol-acid reduction of (S)-2-acetolactate (S2AL) to yield (R)-2,3-dihydroxy-isovalerate. In the isomerase reaction, S2AL is rearranged via a Mg-dependent methyl migration to produce 3-hydroxy-3-methyl-2-ketobutyrate (HMKB). In the reductase reaction, this 2-ketoacid undergoes a metal-dependent reduction by NADPH to yield (R)-2,3-dihydroxy-isovalerate. The chain is Ketol-acid reductoisomerase (NADP(+)) from Methylorubrum extorquens (strain CM4 / NCIMB 13688) (Methylobacterium extorquens).